A 305-amino-acid polypeptide reads, in one-letter code: Oxygen-dependent coproporphyrinogen-III oxidase (305 aa).

Residue serine 98 participates in substrate binding. 2 residues coordinate a divalent metal cation: histidine 102 and histidine 112. Histidine 112 functions as the Proton donor in the catalytic mechanism. Position 114 to 116 (114 to 116 (NVR)) interacts with substrate. Residues histidine 151 and histidine 181 each contribute to the a divalent metal cation site. The tract at residues 246-281 (YVEFNLVYDRGTLFGLQSGGRTESILMSMPPLARWE) is important for dimerization. Residue 264–266 (GGR) coordinates substrate.

It belongs to the aerobic coproporphyrinogen-III oxidase family. As to quaternary structure, homodimer. A divalent metal cation serves as cofactor.

It localises to the cytoplasm. It carries out the reaction coproporphyrinogen III + O2 + 2 H(+) = protoporphyrinogen IX + 2 CO2 + 2 H2O. The protein operates within porphyrin-containing compound metabolism; protoporphyrin-IX biosynthesis; protoporphyrinogen-IX from coproporphyrinogen-III (O2 route): step 1/1. In terms of biological role, involved in the heme biosynthesis. Catalyzes the aerobic oxidative decarboxylation of propionate groups of rings A and B of coproporphyrinogen-III to yield the vinyl groups in protoporphyrinogen-IX. This Vibrio parahaemolyticus serotype O3:K6 (strain RIMD 2210633) protein is Oxygen-dependent coproporphyrinogen-III oxidase.